A 372-amino-acid chain; its full sequence is N-methyl-L-tryptophan oxidase (372 aa).

4–34 (DLIIIGSGSVGAAAGYYATRAGLNVLMTDAH) lines the FAD pocket. Position 308 is an S-8alpha-FAD cysteine (Cys308).

Belongs to the MSOX/MTOX family. MTOX subfamily. Monomer. It depends on FAD as a cofactor.

It catalyses the reaction N(alpha)-methyl-L-tryptophan + O2 + H2O = L-tryptophan + formaldehyde + H2O2. In terms of biological role, catalyzes the oxidative demethylation of N-methyl-L-tryptophan. The chain is N-methyl-L-tryptophan oxidase from Escherichia coli O17:K52:H18 (strain UMN026 / ExPEC).